The following is a 420-amino-acid chain: Polymerase delta-interacting protein 3 (420 aa).

Ala2 is subject to N-acetylalanine. At Ser5 the chain carries Phosphoserine. An Omega-N-methylarginine modification is found at Arg33. Position 127 is a phosphoserine (Ser127). Position 140 is a phosphothreonine (Thr140). Lys200 is covalently cross-linked (Glycyl lysine isopeptide (Lys-Gly) (interchain with G-Cter in SUMO2)). Residues Ser215 and Ser217 each carry the phosphoserine modification. Lys223 is covalently cross-linked (Glycyl lysine isopeptide (Lys-Gly) (interchain with G-Cter in SUMO2)). A Phosphoserine modification is found at Ser244. Residue Lys248 forms a Glycyl lysine isopeptide (Lys-Gly) (interchain with G-Cter in SUMO2) linkage. Positions 256-277 are disordered; sequence TLVNKEEPPKELPPAEPVLSPL. Ser275 carries the post-translational modification Phosphoserine. Residues 280–351 form the RRM domain; it reads TKMTVNNLHP…QPMKCNLHMN (72 aa). A disordered region spans residues 369-394; sequence PSVKKESELPRRGNPASSNPPAEVDP. Basic and acidic residues predominate over residues 370–379; that stretch reads SVKKESELPR. Residue Lys372 forms a Glycyl lysine isopeptide (Lys-Gly) (interchain with G-Cter in SUMO2) linkage. Ser385 carries the post-translational modification Phosphoserine. Lys417 is covalently cross-linked (Glycyl lysine isopeptide (Lys-Gly) (interchain with G-Cter in SUMO2)).

In terms of assembly, interacts with POLD2. Interacts with NCBP1 and EIF4A3. Associates with the multiprotein exon junction complex (EJC). Interacts with RPS6KB1 (activated). Interacts with ERH. Interacts with THOC2, DDX39B and ZC3H11A; the interactions are ATP-dependent and indicative for an association with the TREX complex.

Its subcellular location is the nucleus. It is found in the nucleus speckle. The protein localises to the cytoplasm. Functionally, is involved in regulation of translation. Is preferentially associated with CBC-bound spliced mRNA-protein complexes during the pioneer round of mRNA translation. Contributes to enhanced translational efficiency of spliced over nonspliced mRNAs. Recruits activated ribosomal protein S6 kinase beta-1 I/RPS6KB1 to newly synthesized mRNA. Involved in nuclear mRNA export; probably mediated by association with the TREX complex. The protein is Polymerase delta-interacting protein 3 (Poldip3) of Mus musculus (Mouse).